The sequence spans 455 residues: Ribulose bisphosphate carboxylase large chain (455 aa).

Position 5 is an N6,N6,N6-trimethyllysine (Lys-5). Residues Asn-114 and Thr-164 each contribute to the substrate site. The active-site Proton acceptor is Lys-166. Residue Lys-168 participates in substrate binding. Lys-192, Asp-194, and Glu-195 together coordinate Mg(2+). Lys-192 carries the N6-carboxylysine modification. Residue His-285 is the Proton acceptor of the active site. Substrate contacts are provided by Arg-286, His-318, and Ser-370.

This sequence belongs to the RuBisCO large chain family. Type I subfamily. As to quaternary structure, heterohexadecamer of 8 large chains and 8 small chains; disulfide-linked. The disulfide link is formed within the large subunit homodimers. Mg(2+) is required as a cofactor. Post-translationally, the disulfide bond which can form in the large chain dimeric partners within the hexadecamer appears to be associated with oxidative stress and protein turnover.

It is found in the plastid. Its subcellular location is the chloroplast. The catalysed reaction is 2 (2R)-3-phosphoglycerate + 2 H(+) = D-ribulose 1,5-bisphosphate + CO2 + H2O. It carries out the reaction D-ribulose 1,5-bisphosphate + O2 = 2-phosphoglycolate + (2R)-3-phosphoglycerate + 2 H(+). In terms of biological role, ruBisCO catalyzes two reactions: the carboxylation of D-ribulose 1,5-bisphosphate, the primary event in carbon dioxide fixation, as well as the oxidative fragmentation of the pentose substrate in the photorespiration process. Both reactions occur simultaneously and in competition at the same active site. The chain is Ribulose bisphosphate carboxylase large chain from Lupinus digitatus (Lupine).